Here is a 171-residue protein sequence, read N- to C-terminus: Der GTPase-activating protein YihI (171 aa).

2 disordered regions span residues 1–99 and 145–171; these read MKKP…PQAE and GLSY…KGGN. The span at 20–30 shows a compositional bias: basic and acidic residues; it reads TREELNQEARD. Positions 40–59 are enriched in low complexity; sequence HSAGSRANGSSASGSTAQNS. Acidic residues predominate over residues 148–160; sequence YEDDEDDEEEEKQ.

Belongs to the YihI family. Interacts with Der.

Functionally, a GTPase-activating protein (GAP) that modifies Der/EngA GTPase function. May play a role in ribosome biogenesis. This chain is Der GTPase-activating protein YihI, found in Enterobacter sp. (strain 638).